The following is a 66-amino-acid chain: Panusin (66 aa).

A signal peptide spans 1–22 (MKTKAVLMLMLLVLVAATLVQG). A propeptide spanning residues 23–26 (EPEP) is cleaved from the precursor. Intrachain disulfides connect Cys32–Cys54, Cys39–Cys61, and Cys44–Cys60. Position 65 is a tyrosine amide (Tyr65).

In terms of assembly, forms dimers and higher-order oligomers. Contains 3 disulfide bonds.

Functionally, antimicrobial peptide. Has antibacterial activity against Gram-positive bacteria S.aureus ATCC 29737 and B.subtilis ATCC 6633 as well as against Gram-negative bacteria E.coli ATCC 10536 and K.pneumoniae ATCC 10031. The sequence is that of Panusin from Panulirus argus (Caribbean spiny lobster).